A 127-amino-acid chain; its full sequence is Large ribosomal subunit protein uL18 (127 aa).

The protein belongs to the universal ribosomal protein uL18 family. In terms of assembly, part of the 50S ribosomal subunit; part of the 5S rRNA/L5/L18/L25 subcomplex. Contacts the 5S and 23S rRNAs.

Functionally, this is one of the proteins that bind and probably mediate the attachment of the 5S RNA into the large ribosomal subunit, where it forms part of the central protuberance. The chain is Large ribosomal subunit protein uL18 from Streptomyces griseus subsp. griseus (strain JCM 4626 / CBS 651.72 / NBRC 13350 / KCC S-0626 / ISP 5235).